The primary structure comprises 313 residues: Porphobilinogen deaminase (313 aa).

S-(dipyrrolylmethanemethyl)cysteine is present on Cys-242.

Belongs to the HMBS family. In terms of assembly, monomer. The cofactor is dipyrromethane.

It catalyses the reaction 4 porphobilinogen + H2O = hydroxymethylbilane + 4 NH4(+). It functions in the pathway porphyrin-containing compound metabolism; protoporphyrin-IX biosynthesis; coproporphyrinogen-III from 5-aminolevulinate: step 2/4. Functionally, tetrapolymerization of the monopyrrole PBG into the hydroxymethylbilane pre-uroporphyrinogen in several discrete steps. The chain is Porphobilinogen deaminase from Klebsiella pneumoniae subsp. pneumoniae (strain ATCC 700721 / MGH 78578).